A 246-amino-acid chain; its full sequence is Dolichol-phosphate mannosyltransferase subunit 1 (246 aa).

GDP-alpha-D-mannose-binding residues include Pro-20, Tyr-22, Glu-24, Val-49, Asp-51, Asp-104, Ala-105, Asp-106, Arg-133, Arg-220, and Lys-226. Residue Asp-106 participates in Mg(2+) binding. Asp-106 contacts Mn(2+).

It belongs to the glycosyltransferase 2 family. As to quaternary structure, component of the dolichol-phosphate mannose (DPM) synthase complex composed of DPMS1, DPMS2 and DPMS3; in the complex interacts directly with DPMS3. The cofactor is Mg(2+). Mn(2+) is required as a cofactor. It depends on Ca(2+) as a cofactor.

It localises to the endoplasmic reticulum membrane. The catalysed reaction is a di-trans,poly-cis-dolichyl phosphate + GDP-alpha-D-mannose = a di-trans,poly-cis-dolichyl beta-D-mannosyl phosphate + GDP. It functions in the pathway protein modification; protein glycosylation. Transfers mannose from GDP-mannose to dolichol monophosphate to form dolichol phosphate mannose (Dol-P-Man) which is the mannosyl donor in pathways leading to N-glycosylation, glycosyl phosphatidylinositol membrane anchoring, and O-mannosylation of proteins; catalytic subunit of the dolichol-phosphate mannose (DPM) synthase complex. Plays a role in plant development and physiology, sensitivity to ammonium stress and endoplasmic reticulum stress response. This chain is Dolichol-phosphate mannosyltransferase subunit 1, found in Arabidopsis thaliana (Mouse-ear cress).